Reading from the N-terminus, the 120-residue chain is Large ribosomal subunit protein uL18 (120 aa).

Belongs to the universal ribosomal protein uL18 family. Part of the 50S ribosomal subunit; part of the 5S rRNA/L5/L18/L25 subcomplex. Contacts the 5S and 23S rRNAs.

Functionally, this is one of the proteins that bind and probably mediate the attachment of the 5S RNA into the large ribosomal subunit, where it forms part of the central protuberance. The sequence is that of Large ribosomal subunit protein uL18 from Rhodopseudomonas palustris (strain BisB5).